Reading from the N-terminus, the 83-residue chain is Greglin (83 aa).

A phosphoserine mark is found at Ser-8, Ser-11, and Ser-15. 4 disulfide bridges follow: Cys-21–Cys-55, Cys-25–Cys-48, Cys-33–Cys-69, and Cys-53–Cys-76.

Functionally, serine protease inhibitor. Inhibits porcine pancreatic elastase with a Ki of 58.3 nM, human neutrophil elastase with a Ki of 3.6 nM, cathepsin G with a Ki of 153.5 nM, chymotrypsin with a Ki of 26.7 nM and subtilisin with a Ki of 0.68 nM. Does not inhibit neutrophil protease 3 or pancreatic trypsin. The protein is Greglin of Schistocerca gregaria (Desert locust).